A 128-amino-acid chain; its full sequence is UPF0102 protein Acry_2261 (128 aa).

This sequence belongs to the UPF0102 family.

The sequence is that of UPF0102 protein Acry_2261 from Acidiphilium cryptum (strain JF-5).